Reading from the N-terminus, the 230-residue chain is Small ribosomal subunit protein uS7m (230 aa).

This sequence belongs to the universal ribosomal protein uS7 family. Part of the small ribosomal subunit.

It is found in the mitochondrion. Its function is as follows. One of the primary rRNA binding proteins, it binds directly to 18S rRNA where it nucleates assembly of the head domain of the small subunit. This is Small ribosomal subunit protein uS7m (RPS7) from Marchantia polymorpha (Common liverwort).